Reading from the N-terminus, the 304-residue chain is Opsin-1 (304 aa).

Over M1–R45 the chain is Extracellular. Residues T46–W66 form a helical membrane-spanning segment. The chain crosses the membrane as a helical span at residues L74–A94. Residues Y129 to V149 traverse the membrane as a helical segment. Residues T154 to G174 traverse the membrane as a helical segment. Residues W183–H203 traverse the membrane as a helical segment. The helical transmembrane segment at F219–I239 threads the bilayer. Residues I252–L272 traverse the membrane as a helical segment. At K263 the chain carries N6-(retinylidene)lysine. Residues S273–D304 are Cytoplasmic-facing.

This sequence belongs to the archaeal/bacterial/fungal opsin family. Post-translationally, binds all-trans retinal via a protonated Schiff base linkage.

Its subcellular location is the membrane. In terms of biological role, could facilitate a sensory photoresponse. The polypeptide is Opsin-1 (nop-1) (Neurospora crassa (strain ATCC 24698 / 74-OR23-1A / CBS 708.71 / DSM 1257 / FGSC 987)).